The primary structure comprises 1161 residues: Nuclear pore complex-interacting protein family member B11 (1161 aa).

Residues 63–87 traverse the membrane as a helical segment; sequence IIIAFPTSYKVVITLWIVYLWVSLL. Disordered regions lie at residues 278–580 and 892–1161; these read ADDN…DDNI and SADD…RRLS. Over residues 311–321 the composition is skewed to pro residues; that stretch reads PLPPSAPPSAP. Composition is skewed to basic and acidic residues over residues 368-378, 410-420, 452-462, 494-504, 536-546, 918-928, 960-970, 1002-1012, and 1044-1054; these read DNIKTTAERLR, DNIKTPAEHLR, DNIKTPAERLR, and DNIKTTAEHLR.

This sequence belongs to the NPIP family.

Its subcellular location is the membrane. The polypeptide is Nuclear pore complex-interacting protein family member B11 (NPIPB11) (Homo sapiens (Human)).